Consider the following 508-residue polypeptide: Erythropoietin receptor (508 aa).

Positions 1 to 24 (MNHLWTHLWPGVGSLCLLLAGAAW) are cleaved as a signal peptide. At 25–250 (ASLPKPLDPK…SLLTASDLDP (226 aa)) the chain is on the extracellular side. Cys-52 and Cys-62 form a disulfide bridge. N-linked (GlcNAc...) asparagine glycosylation is present at Asn-76. The cysteines at positions 91 and 107 are disulfide-linked. Residues 148–247 (PPAGLLARRA…EPASLLTASD (100 aa)) form the Fibronectin type-III domain. Residue Asn-184 is glycosylated (N-linked (GlcNAc...) asparagine). A WSXWS motif motif is present at residues 233 to 237 (WSAWS). A helical membrane pass occupies residues 251-273 (LILTLSLILVLILLLLAVLALLS). The Cytoplasmic portion of the chain corresponds to 274 to 508 (HRRTLKQKIW…PSPPGYVACS (235 aa)). Residue Lys-281 forms a Glycyl lysine isopeptide (Lys-Gly) (interchain with G-Cter in ubiquitin) linkage. The short motif at 282 to 290 (IWPGIPSPE) is the Box 1 motif element. Residues Tyr-368 and Tyr-426 each carry the phosphotyrosine; by JAK2 modification. The ITIM motif motif lies at 452–457 (IKYLYL). A Glycyl lysine isopeptide (Lys-Gly) (interchain with G-Cter in ubiquitin) cross-link involves residue Lys-453. Residues Tyr-454, Tyr-456, Tyr-468, Tyr-489, and Tyr-504 each carry the phosphotyrosine; by JAK2 modification. The disordered stretch occupies residues 467-508 (DYSSGGSQGAQGDSLNSPFLNPYENSLIPAPEPSPPGYVACS).

The protein belongs to the type I cytokine receptor family. Type 1 subfamily. In terms of assembly, forms homodimers on EPO stimulation. The tyrosine-phosphorylated form interacts with several SH2 domain-containing proteins including LYN, the adapter protein SH2B2, PTPN6, PTPN11, JAK2, PI3 kinases, STAT5A/B, SOCS3, CRKL. Interacts with INPP5D/SHIP1. SH2B2 binding inhibits the JAK-STAT signaling. Interacts with RHEX; this interaction occurs in a erythropoietin (EPO)-dependent manner. Interacts with ATXN2L. Post-translationally, on EPO stimulation, phosphorylated on C-terminal tyrosine residues by JAK2. The phosphotyrosine motifs are also recruitment sites for several SH2-containing proteins and adapter proteins which mediate cell proliferation. Phosphorylation on Tyr-454 is required for PTPN6 interaction, Tyr-426 for PTPN11. Tyr-426 is also required for SOCS3 binding, but Tyr-454/Tyr-456 motif is the preferred binding site. In terms of processing, ubiquitinated by the ECS(SOCS2) complex following ligand-binding and phosphorylation by JAK2, leading to its degradation by the proteasome. Regulation by the ECS(SOCS2) complex acts as a negative feedback loop of erythropoietin-mediated signaling pathway. Ubiquitination at Lys-281 mediates receptor internalization, whereas ubiquitination at Lys-453 promotes trafficking of activated receptors to the lysosomes for degradation. Ubiquitinated by NOSIP; appears to be either multi-monoubiquitinated or polyubiquitinated. Ubiquitination mediates proliferation and survival of EPO-dependent cells.

Its subcellular location is the cell membrane. Receptor for erythropoietin, which mediates erythropoietin-induced erythroblast proliferation and differentiation. Upon EPO stimulation, EPOR dimerizes triggering the JAK2/STAT5 signaling cascade. In some cell types, can also activate STAT1 and STAT3. May also activate the LYN tyrosine kinase. Its function is as follows. Isoform EPOR-T acts as a dominant-negative receptor of EPOR-mediated signaling. The protein is Erythropoietin receptor (EPOR) of Canis lupus familiaris (Dog).